The chain runs to 316 residues: MNDVSKASLPKAIFLMGPTASGKTALAIELRKVLPVELISVDSALIYRGMDIGTAKPNADELKAAPHRLLDIRDPSQAYSAADFRRDALAQMAEITAAGRIPLLVGGTMLYFKALLEGLSPLPSADPEVRSRIEQQAAELGWEALHQQLQEIDPVAAARIHPNDPQRLSRALEVFFISGKTLTELTQTSGDALPYQVHQFAIAPASRELLHQRIELRFHQMLASGFEAEVRALFARGDLHTDLPSIRCVGYRQMWSYIEGEISYDEMVYRGVCATRQLAKRQMTWLRGWEGVRWLDSENPDRARKEVLQVVGAIAD.

17–24 provides a ligand contact to ATP; sequence GPTASGKT. 19 to 24 contributes to the substrate binding site; sequence TASGKT. 3 interaction with substrate tRNA regions span residues 42–45, 166–170, and 247–252; these read DSAL, QRLSR, and RCVGYR.

This sequence belongs to the IPP transferase family. In terms of assembly, monomer. The cofactor is Mg(2+).

The enzyme catalyses adenosine(37) in tRNA + dimethylallyl diphosphate = N(6)-dimethylallyladenosine(37) in tRNA + diphosphate. Its function is as follows. Catalyzes the transfer of a dimethylallyl group onto the adenine at position 37 in tRNAs that read codons beginning with uridine, leading to the formation of N6-(dimethylallyl)adenosine (i(6)A). The sequence is that of tRNA dimethylallyltransferase from Salmonella schwarzengrund (strain CVM19633).